A 686-amino-acid polypeptide reads, in one-letter code: NADH-ubiquinone oxidoreductase chain 5 (686 aa).

17 consecutive transmembrane segments (helical) span residues 3 to 23 (LIIL…GRFV), 40 to 60 (ALLS…LFSF), 101 to 121 (ITLP…LFSV), 139 to 159 (LFTF…LFVG), 160 to 180 (WEGI…RIQA), 198 to 218 (LSIA…STVF), 222 to 242 (AYIN…GAMA), 261 to 281 (TPVS…YLLI), 293 to 313 (VLLV…TCGL), 321 to 341 (IIAF…GLSQ), 350 to 370 (LFHA…IHAF), 382 to 402 (LINF…SLLA), 432 to 452 (ILGS…ISLV), 472 to 492 (ITVI…GYVT), 526 to 546 (LIFK…ALYL), 635 to 655 (ALYI…PMLV), and 665 to 685 (LIIL…KKLS).

Belongs to the complex I subunit 5 family.

Its subcellular location is the mitochondrion inner membrane. It carries out the reaction a ubiquinone + NADH + 5 H(+)(in) = a ubiquinol + NAD(+) + 4 H(+)(out). Its function is as follows. Core subunit of the mitochondrial membrane respiratory chain NADH dehydrogenase (Complex I) that is believed to belong to the minimal assembly required for catalysis. Complex I functions in the transfer of electrons from NADH to the respiratory chain. The immediate electron acceptor for the enzyme is believed to be ubiquinone. The polypeptide is NADH-ubiquinone oxidoreductase chain 5 (ND5) (Schizophyllum commune (Split gill fungus)).